The chain runs to 769 residues: Polyribonucleotide nucleotidyltransferase (769 aa).

Positions 490 and 496 each coordinate Mg(2+). The 60-residue stretch at 557–616 (PKIDTIMIPVDKIKVVIGKGGEQIDKIIAETGVKIDIDDEGLCSIFSSDQSAIDRAKEII) folds into the KH domain. The 69-residue stretch at 626–694 (GEVYEAKVVR…DKGRVDASMR (69 aa)) folds into the S1 motif domain. Positions 700–734 (PEGYVEPERKPRERRDNKDRRNGNGFDRRNNDRNN) are enriched in basic and acidic residues. The disordered stretch occupies residues 700 to 769 (PEGYVEPERK…FPELSTKKPE (70 aa)). Positions 736–746 (NNHNNNSGNHS) are enriched in low complexity. The segment covering 747–769 (FELRERKSHVDHEFPELSTKKPE) has biased composition (basic and acidic residues).

This sequence belongs to the polyribonucleotide nucleotidyltransferase family. Mg(2+) serves as cofactor.

Its subcellular location is the cytoplasm. It catalyses the reaction RNA(n+1) + phosphate = RNA(n) + a ribonucleoside 5'-diphosphate. In terms of biological role, involved in mRNA degradation. Catalyzes the phosphorolysis of single-stranded polyribonucleotides processively in the 3'- to 5'-direction. The polypeptide is Polyribonucleotide nucleotidyltransferase (Lactococcus lactis subsp. cremoris (strain SK11)).